A 348-amino-acid chain; its full sequence is Protein RecA (348 aa).

64-71 (GPESSGKT) serves as a coordination point for ATP. The span at 324-335 (EYEIDGSNKEPL) shows a compositional bias: basic and acidic residues. Positions 324–348 (EYEIDGSNKEPLAETEETLSLLDDE) are disordered. The span at 336 to 348 (AETEETLSLLDDE) shows a compositional bias: acidic residues.

This sequence belongs to the RecA family.

It is found in the cytoplasm. Can catalyze the hydrolysis of ATP in the presence of single-stranded DNA, the ATP-dependent uptake of single-stranded DNA by duplex DNA, and the ATP-dependent hybridization of homologous single-stranded DNAs. It interacts with LexA causing its activation and leading to its autocatalytic cleavage. The sequence is that of Protein RecA from Listeria ivanovii.